Reading from the N-terminus, the 559-residue chain is Beta-glucuronidase (559 aa).

The first 19 residues, 1 to 19 (MKRILGLIAYASVPTVINA), serve as a signal peptide directing secretion. 4 N-linked (GlcNAc...) asparagine glycosylation sites follow: Asn-53, Asn-91, Asn-99, and Asn-143. Residue Glu-194 is the Proton donor of the active site. N-linked (GlcNAc...) asparagine glycosylation is found at Asn-203, Asn-222, and Asn-280. The Nucleophile role is filled by Glu-312. 5 N-linked (GlcNAc...) asparagine glycosylation sites follow: Asn-427, Asn-440, Asn-465, Asn-491, and Asn-520.

The protein belongs to the glycosyl hydrolase 79 family.

The protein localises to the secreted. It carries out the reaction a beta-D-glucuronoside + H2O = D-glucuronate + an alcohol. In terms of biological role, beta-glucuronidase that hydrolyzes beta-glucuronosyl and 4-O-methyl-beta-glucuronosyl residues of arabinogalactan-protein. Hydrolyzed heparan sulfate only very weakly. Has no activity on xylan from birchwood. Able to catalyze the transglycosylation of glucuronic acid (GlcA) residues from p-nitrophenyl-beta-glucuronic acid (PNP beta-GlcA) to various monosaccharide acceptors such as glucose, galactose and xylose. This is Beta-glucuronidase from Neurospora crassa (strain ATCC 24698 / 74-OR23-1A / CBS 708.71 / DSM 1257 / FGSC 987).